Reading from the N-terminus, the 362-residue chain is Transcription factor bHLH128 (362 aa).

Over residues 1–16 the composition is skewed to low complexity; that stretch reads MYQSSSSTSSSSQRSS. Disordered regions lie at residues 1 to 23, 78 to 106, 120 to 140, and 162 to 184; these read MYQS…GGGL, SDST…SNKD, SQQH…YSLA, and LNQP…HSRL. The span at 78-96 shows a compositional bias: polar residues; it reads SDSTTCGVNNSSDGQKQLG. Residues 162 to 173 are compositionally biased toward polar residues; that stretch reads LNQPTSDYSPQG. Ser-189 carries the post-translational modification Phosphoserine. Residues 289 to 339 form the bHLH domain; it reads CATHPRSIAERERRTRISGKLKKLQDLVPNMDKQTSYSDMLDLAVQHIKGL.

In terms of assembly, homodimer.

The protein resides in the nucleus. The chain is Transcription factor bHLH128 (BHLH128) from Arabidopsis thaliana (Mouse-ear cress).